Reading from the N-terminus, the 898-residue chain is Serine/threonine-protein kinase TAO3 (898 aa).

Residues 24–277 (FIGLHEIGHG…SAELLRHDFV (254 aa)) enclose the Protein kinase domain. Residues 30–38 (IGHGSFGAV) and Lys53 contribute to the ATP site. The Proton acceptor role is filled by Asp147. Disordered stretches follow at residues 316–362 (TRNG…SQSS) and 405–425 (DEAG…VQSQ). Ser324 bears the Phosphoserine; by ATM mark. Residues Ser331, Ser343, Ser346, and Ser349 each carry the phosphoserine modification. Residues 334-351 (GTSLNREMDSLGSNHSIP) are compositionally biased toward polar residues. Over residues 352-362 (SMSVSTGSQSS) the composition is skewed to low complexity. At Thr357 the chain carries Phosphothreonine. Position 359 is a phosphoserine (Ser359). Basic and acidic residues predominate over residues 405 to 416 (DEAGHGDPRPEP). The residue at position 442 (Ser442) is a Phosphoserine. Coiled-coil stretches lie at residues 452-502 (EQEN…THAN), 548-649 (FLES…HAML), and 754-879 (LKTL…DMES). The interval 565–596 (EEMNEDHSTPKKEKQERISKHKENLQHTQAEE) is disordered. An N6-acetyllysine modification is found at Lys830.

Belongs to the protein kinase superfamily. STE Ser/Thr protein kinase family. STE20 subfamily. As to quaternary structure, self-associates. Interacts with ERN1 and TRAF2. Interaction with TRAF2 is facilitated under ER stress conditions, such as treatment with tunicamycin, and may promote TRAF2 phosphorylation. Interacts (via N-terminus) with STK25; the interaction promotes STK25 abundance at the level of protein expression and/or stability. In terms of assembly, (Microbial infection) Interacts with herpes simplex virus 1 UL37 protein. Autophosphorylated. Phosphorylation at Ser-324 by ATM following DNA damage is required for activation of the p38/MAPK14 stress-activated MAPK cascade. Phosphorylated at Ser-324 and on Tyr residues during T cell activation. Phosphorylated by LRRK2. Ubiquitously expressed at a low level, and highly expressed in peripheral blood leukocytes (PBLs), thymus, spleen, kidney, skeletal muscle, heart and liver.

It localises to the cytoplasm. Its subcellular location is the cell membrane. The protein localises to the membrane raft. It is found in the lipid droplet. It catalyses the reaction L-seryl-[protein] + ATP = O-phospho-L-seryl-[protein] + ADP + H(+). The enzyme catalyses L-threonyl-[protein] + ATP = O-phospho-L-threonyl-[protein] + ADP + H(+). In terms of biological role, serine/threonine-protein kinase that acts as a regulator of the p38/MAPK14 stress-activated MAPK cascade and of the MAPK8/JNK cascade. In response to DNA damage, involved in the G2/M transition DNA damage checkpoint by activating the p38/MAPK14 stress-activated MAPK cascade, probably by mediating phosphorylation of upstream MAP2K3 and MAP2K6 kinases. Inhibits basal activity of the MAPK8/JNK cascade and diminishes its activation in response to epidermal growth factor (EGF). Positively regulates canonical T cell receptor (TCR) signaling by preventing early PTPN6/SHP1-mediated inactivation of LCK, ensuring sustained TCR signaling that is required for optimal activation and differentiation of T cells. Phosphorylates PTPN6/SHP1 on 'Thr-394', leading to its polyubiquitination and subsequent proteasomal degradation. Required for cell surface expression of metalloprotease ADAM10 on type 1 transitional B cells which is necessary for their NOTCH-mediated development into marginal zone B cells. Also required for the NOTCH-mediated terminal differentiation of splenic conventional type 2 dendritic cells. Positively regulates osteoblast differentiation by acting as an upstream activator of the JNK pathway. Promotes JNK signaling in hepatocytes and positively regulates hepatocyte lipid storage by inhibiting beta-oxidation and triacylglycerol secretion while enhancing lipid synthesis. Restricts age-associated inflammation by negatively regulating differentiation of macrophages and their production of pro-inflammatory cytokines. Plays a role in negatively regulating the abundance of regulatory T cells in white adipose tissue. The polypeptide is Serine/threonine-protein kinase TAO3 (TAOK3) (Homo sapiens (Human)).